A 610-amino-acid polypeptide reads, in one-letter code: Protein SAN1 (610 aa).

Polar residues predominate over residues 1–10 (MSESGQEQNR). Disordered regions lie at residues 1–36 (MSES…NGGA) and 176–231 (VDST…PSIP). Low complexity predominate over residues 11 to 36 (GTNTSPNNAENNNNSNAASGPLNGGA). Positions 194–203 (EGTKKRKDNE) are enriched in basic and acidic residues. The span at 210–223 (TADNDSNPSITNAT) shows a compositional bias: polar residues. Residues 240-280 (NDEETNPSYKHSPIKLPCGHIFGRECIYKWSRLENSCPLCR) form an RING-type zinc finger. Disordered regions lie at residues 318-348 (TAVN…ASSG), 360-453 (VPQN…TDPH), 471-502 (GTSD…TTQG), 514-554 (GHFT…GVAS), and 569-610 (NNNS…RSSQ). Residues 319 to 348 (AVNSTNENSSAPSENTSNTTVPTIGNASSG) are compositionally biased toward polar residues. Low complexity-rich tracts occupy residues 384–406 (NGPS…NQSP) and 425–447 (PSAS…NTSS). Polar residues predominate over residues 471-492 (GTSDTSATTAPGAQTVHNQGRN). Over residues 493-502 (DSSSSDTTQG) the composition is skewed to low complexity. Composition is skewed to polar residues over residues 533–554 (QQRG…GVAS) and 592–610 (DTTI…RSSQ).

Plays a specific role in mating-type regulation of yeast, by acting post-translationally to control the stability or activity of the SIR4 proteins. The chain is Protein SAN1 (SAN1) from Saccharomyces cerevisiae (strain ATCC 204508 / S288c) (Baker's yeast).